The sequence spans 284 residues: tRNA uridine(34) hydroxylase (284 aa).

Residues 132–226 (TGRPVVMLDT…YFEEVGGAHY (95 aa)) enclose the Rhodanese domain. Cys186 serves as the catalytic Cysteine persulfide intermediate.

The protein belongs to the TrhO family.

It catalyses the reaction uridine(34) in tRNA + AH2 + O2 = 5-hydroxyuridine(34) in tRNA + A + H2O. Functionally, catalyzes oxygen-dependent 5-hydroxyuridine (ho5U) modification at position 34 in tRNAs. This is tRNA uridine(34) hydroxylase from Burkholderia lata (strain ATCC 17760 / DSM 23089 / LMG 22485 / NCIMB 9086 / R18194 / 383).